The chain runs to 105 residues: Heat shock protein HspQ (105 aa).

Positions 80–105 (AHPEQPSLDELAASIRHQLQAPHLRN) are disordered.

Belongs to the HspQ family.

The protein localises to the cytoplasm. Functionally, involved in the degradation of certain denaturated proteins, including DnaA, during heat shock stress. The polypeptide is Heat shock protein HspQ (Yersinia pseudotuberculosis serotype O:1b (strain IP 31758)).